Reading from the N-terminus, the 1305-residue chain is Rho GTPase-activating protein 33 (1305 aa).

Residues 1–64 form a disordered region; the sequence is MLQAQKQSDP…KPGKRLSAPR (64 aa). Ser32 bears the Phosphoserine mark. Residues 83–192 enclose the PX; atypical domain; that stretch reads FGHIQLLLSP…CGPVLTWMEL (110 aa). Residues 210-272 form the SH3 domain; it reads PAVAAAHVVK…PSECVELFTE (63 aa). Residues 339-534 form the Rho-GAP domain; sequence CDLGEHLSNS…FLLTHVEVLF (196 aa). Disordered stretches follow at residues 575 to 818, 864 to 1054, and 1115 to 1305; these read RTQG…LDIS, LSDT…SFFS, and SYSG…RSYC. Residues 582 to 595 are compositionally biased toward low complexity; that stretch reads TPTEPTTPKTPASP. Ser594 carries the post-translational modification Phosphoserine. Positions 596-608 are enriched in basic and acidic residues; sequence VERRKRERAEKQR. Polar residues predominate over residues 646 to 669; that stretch reads SGSRPDTVTLRSAKSEESLSSQAS. Ser660 is modified (phosphoserine). The segment covering 694–733 has biased composition (low complexity); it reads APAGSCESLSSSSSSSSSSSSSSSSESSAGGLGPLSGSPS. At Ser749 the chain carries Phosphoserine. Positions 774–786 are enriched in pro residues; it reads PGDPAPPASPAPP. Positions 787-798 are enriched in low complexity; it reads ASASAFPPRATP. Over residues 864–873 the composition is skewed to polar residues; it reads LSDTCQQEIS. Residues 895-915 show a composition bias toward pro residues; it reads LLPPPLPLLRPGGAPPPPPKN. Over residues 916–940 the composition is skewed to low complexity; that stretch reads PARLMALALAERAQQVAEQQSQQEQ. Polar residues-rich tracts occupy residues 992–1020, 1039–1054, and 1115–1125; these read RQQS…SQVS, SPCS…SFFS, and SYSGPSRSWSP. Tyr1188 carries the phosphotyrosine modification. The segment covering 1194–1208 has biased composition (low complexity); that stretch reads GPRGPSPASSSSSSP. Arg1263 is modified (omega-N-methylarginine). Over residues 1292-1305 the composition is skewed to polar residues; that stretch reads SWSLHSEGQTRSYC.

Belongs to the PX domain-containing GAP family. Specifically interacts with CDC42 and RHOQ/TC10 through its Rho-GAP domain. Interacts with NEK6. Highly expressed in brain and testis. Also expressed in white adipose tissue (WAT) and muscle at a low level.

The protein localises to the cell membrane. Functionally, may be involved in several stages of intracellular trafficking. Could play an important role in the regulation of glucose transport by insulin. May act as a downstream effector of RHOQ/TC10 in the regulation of insulin-stimulated glucose transport. This chain is Rho GTPase-activating protein 33 (Arhgap33), found in Mus musculus (Mouse).